Here is a 65-residue protein sequence, read N- to C-terminus: Large ribosomal subunit protein bL35 (65 aa).

Residues 1–51 (MPKIKTNRGAAKRFRKSASGRVKRGNAFTSHILTHKTRKNKRNLRGTSMVS) form a disordered region. Composition is skewed to basic residues over residues 10 to 24 (AAKR…RVKR) and 33 to 44 (LTHKTRKNKRNL).

The protein belongs to the bacterial ribosomal protein bL35 family.

The sequence is that of Large ribosomal subunit protein bL35 from Pelobacter propionicus (strain DSM 2379 / NBRC 103807 / OttBd1).